Here is a 366-residue protein sequence, read N- to C-terminus: Flagellar P-ring protein (366 aa).

An N-terminal signal peptide occupies residues Met-1–Ala-23.

The protein belongs to the FlgI family. In terms of assembly, the basal body constitutes a major portion of the flagellar organelle and consists of four rings (L,P,S, and M) mounted on a central rod.

It localises to the periplasm. The protein resides in the bacterial flagellum basal body. Assembles around the rod to form the L-ring and probably protects the motor/basal body from shearing forces during rotation. This Idiomarina loihiensis (strain ATCC BAA-735 / DSM 15497 / L2-TR) protein is Flagellar P-ring protein.